Here is a 339-residue protein sequence, read N- to C-terminus: NADH-quinone oxidoreductase subunit H (339 aa).

The next 8 helical transmembrane spans lie at 9–29 (IFPL…LILC), 82–102 (ILFV…WAVI), 115–135 (VGVL…IIAG), 161–181 (MGLV…SQIV), 187–207 (MPWW…ISVL), 235–255 (MGFA…SAMT), 275–295 (IPGF…FLWI), and 311–331 (GWKV…SVLI).

It belongs to the complex I subunit 1 family. As to quaternary structure, NDH-1 is composed of 14 different subunits. Subunits NuoA, H, J, K, L, M, N constitute the membrane sector of the complex.

The protein localises to the cell inner membrane. The catalysed reaction is a quinone + NADH + 5 H(+)(in) = a quinol + NAD(+) + 4 H(+)(out). In terms of biological role, NDH-1 shuttles electrons from NADH, via FMN and iron-sulfur (Fe-S) centers, to quinones in the respiratory chain. The immediate electron acceptor for the enzyme in this species is believed to be ubiquinone. Couples the redox reaction to proton translocation (for every two electrons transferred, four hydrogen ions are translocated across the cytoplasmic membrane), and thus conserves the redox energy in a proton gradient. This subunit may bind ubiquinone. The chain is NADH-quinone oxidoreductase subunit H from Rickettsia bellii (strain OSU 85-389).